The following is a 43-amino-acid chain: Iota-conotoxin-like S11.2 (43 aa).

4 cysteine pairs are disulfide-bonded: cysteine 2–cysteine 16, cysteine 9–cysteine 19, cysteine 15–cysteine 24, and cysteine 18–cysteine 35. Methionine 41 carries the D-methionine modification. Residue arginine 43 is a propeptide, removed by a carboxypeptidase.

This sequence belongs to the conotoxin I1 superfamily. Expressed by the venom duct.

It is found in the secreted. Functionally, iota-conotoxins bind to voltage-gated sodium channels (Nav) and act as agonists by shifting the voltage-dependence of activation to more hyperpolarized levels. Produces general excitatory symptoms. This Conus striatus (Striated cone) protein is Iota-conotoxin-like S11.2.